The sequence spans 560 residues: Membrane protein insertase YidC (560 aa).

A helical membrane pass occupies residues 1-21; it reads MDIKRTILIAALAIVSYVMVL. Residues 42–66 are disordered; that stretch reads VAPGLPDGVPAANNGASADVPSANA. Transmembrane regions (helical) follow at residues 341–361, 367–387, 437–457, 468–488, and 515–535; these read LELT…FWLL, LLGN…GLFF, LGGC…YWVL, WMLW…PIIM, and PIIF…YWVV.

The protein belongs to the OXA1/ALB3/YidC family. Type 1 subfamily. In terms of assembly, interacts with the Sec translocase complex via SecD. Specifically interacts with transmembrane segments of nascent integral membrane proteins during membrane integration.

The protein resides in the cell inner membrane. In terms of biological role, required for the insertion and/or proper folding and/or complex formation of integral membrane proteins into the membrane. Involved in integration of membrane proteins that insert both dependently and independently of the Sec translocase complex, as well as at least some lipoproteins. Aids folding of multispanning membrane proteins. The chain is Membrane protein insertase YidC from Pseudomonas putida (strain W619).